The following is a 479-amino-acid chain: NADH-quinone oxidoreductase subunit N 2 (479 aa).

Transmembrane regions (helical) follow at residues 4–24 (FVSFLPELVLLAGALALFVVT), 43–63 (GVLVAALATVNHSAVLFSGAY), 67–87 (AFSQLLKIAIAFGYLCVGILS), 99–119 (PEYFLFLALSMTGLLALVSSI), 121–141 (VITLIIALELSSFPLYLMVAM), 159–179 (IMFGIAANGVMFFGFGYLYGL), 201–221 (AVTGLALTLAGFLYKLAVFPF), 239–259 (LIASLPKLGAVAVLVRFVSLA), 267–287 (ATLLTCLAIASMVYGNLIALV), 294–314 (LLGFSGIAHAGYVMVGFVAMD), 318–338 (FASALYYIAGYMLMVLACFVV), 364–384 (LAVTLIVGVFALAGVPPFVGF), 401–421 (ALVVLTVINSAIAIYYYLQIV), and 444–464 (ALCVLLIVAITLLGVAPAFTI).

Belongs to the complex I subunit 2 family. As to quaternary structure, NDH-1 is composed of 14 different subunits. Subunits NuoA, H, J, K, L, M, N constitute the membrane sector of the complex.

The protein resides in the cell inner membrane. It catalyses the reaction a quinone + NADH + 5 H(+)(in) = a quinol + NAD(+) + 4 H(+)(out). NDH-1 shuttles electrons from NADH, via FMN and iron-sulfur (Fe-S) centers, to quinones in the respiratory chain. The immediate electron acceptor for the enzyme in this species is believed to be ubiquinone. Couples the redox reaction to proton translocation (for every two electrons transferred, four hydrogen ions are translocated across the cytoplasmic membrane), and thus conserves the redox energy in a proton gradient. The chain is NADH-quinone oxidoreductase subunit N 2 from Opitutus terrae (strain DSM 11246 / JCM 15787 / PB90-1).